The primary structure comprises 197 residues: uncharacterized protein (197 aa).

This is an uncharacterized protein from Acanthamoeba polyphaga (Amoeba).